We begin with the raw amino-acid sequence, 307 residues long: Ribonuclease Z (307 aa).

Zn(2+)-binding residues include His-63, His-65, Asp-67, His-68, His-140, Asp-211, and His-269. The active-site Proton acceptor is Asp-67.

This sequence belongs to the RNase Z family. Homodimer. Zn(2+) serves as cofactor.

The catalysed reaction is Endonucleolytic cleavage of RNA, removing extra 3' nucleotides from tRNA precursor, generating 3' termini of tRNAs. A 3'-hydroxy group is left at the tRNA terminus and a 5'-phosphoryl group is left at the trailer molecule.. Its function is as follows. Zinc phosphodiesterase, which displays some tRNA 3'-processing endonuclease activity. Probably involved in tRNA maturation, by removing a 3'-trailer from precursor tRNA. The sequence is that of Ribonuclease Z from Bacillus subtilis (strain 168).